The primary structure comprises 449 residues: Probable glucuronosyltransferase 47 A (449 aa).

Over 1–31 the chain is Cytoplasmic; that stretch reads MEHPLECADSCSLAMSWFCNKKCRGWGLMKR. The helical; Signal-anchor for type II membrane protein transmembrane segment at 32 to 52 threads the bilayer; sequence TVVASGLRSVVLLLLFIYFVQ. The Lumenal segment spans residues 53–449; it reads DVTAEMGHQR…GDLYPWGNDL (397 aa). 2 N-linked (GlcNAc...) asparagine glycosylation sites follow: Asn-172 and Asn-433.

It belongs to the glycosyltransferase 47 family. Mostly expressed in newly formed or expanding tissues.

It is found in the golgi apparatus membrane. In terms of biological role, involved in the synthesis of glucuronoxylan hemicellulose in secondary cell walls. In Physcomitrium patens (Spreading-leaved earth moss), this protein is Probable glucuronosyltransferase 47 A.